Reading from the N-terminus, the 323-residue chain is Elongation factor P--(R)-beta-lysine ligase (323 aa).

A substrate-binding site is contributed by serine 76–glutamate 78. Residues arginine 100–glutamate 102 and asparagine 109 each bind ATP. Tyrosine 118 provides a ligand contact to substrate. ATP is bound at residue glutamate 242 to leucine 243. Position 249 (glutamate 249) interacts with substrate. Glycine 298 lines the ATP pocket.

The protein belongs to the class-II aminoacyl-tRNA synthetase family. EpmA subfamily. Homodimer.

It catalyses the reaction D-beta-lysine + L-lysyl-[protein] + ATP = N(6)-((3R)-3,6-diaminohexanoyl)-L-lysyl-[protein] + AMP + diphosphate + H(+). Its function is as follows. With EpmB is involved in the beta-lysylation step of the post-translational modification of translation elongation factor P (EF-P). Catalyzes the ATP-dependent activation of (R)-beta-lysine produced by EpmB, forming a lysyl-adenylate, from which the beta-lysyl moiety is then transferred to the epsilon-amino group of a conserved specific lysine residue in EF-P. The chain is Elongation factor P--(R)-beta-lysine ligase from Mannheimia succiniciproducens (strain KCTC 0769BP / MBEL55E).